The chain runs to 319 residues: Acetyl-coenzyme A carboxylase carboxyl transferase subunit alpha (319 aa).

A CoA carboxyltransferase C-terminal domain is found at 43–296; the sequence is LKQKSVELTQ…KTQLLLDLVE (254 aa).

Belongs to the AccA family. Acetyl-CoA carboxylase is a heterohexamer composed of biotin carboxyl carrier protein (AccB), biotin carboxylase (AccC) and two subunits each of ACCase subunit alpha (AccA) and ACCase subunit beta (AccD).

It is found in the cytoplasm. It catalyses the reaction N(6)-carboxybiotinyl-L-lysyl-[protein] + acetyl-CoA = N(6)-biotinyl-L-lysyl-[protein] + malonyl-CoA. Its pathway is lipid metabolism; malonyl-CoA biosynthesis; malonyl-CoA from acetyl-CoA: step 1/1. Its function is as follows. Component of the acetyl coenzyme A carboxylase (ACC) complex. First, biotin carboxylase catalyzes the carboxylation of biotin on its carrier protein (BCCP) and then the CO(2) group is transferred by the carboxyltransferase to acetyl-CoA to form malonyl-CoA. In Blochmanniella floridana, this protein is Acetyl-coenzyme A carboxylase carboxyl transferase subunit alpha.